The following is a 406-amino-acid chain: Probable tRNA sulfurtransferase (406 aa).

Residues E60–K166 form the THUMP domain. ATP-binding positions include M184–L185, H209–F210, R266, G288, and Q297.

This sequence belongs to the ThiI family.

The protein resides in the cytoplasm. The enzyme catalyses [ThiI sulfur-carrier protein]-S-sulfanyl-L-cysteine + a uridine in tRNA + 2 reduced [2Fe-2S]-[ferredoxin] + ATP + H(+) = [ThiI sulfur-carrier protein]-L-cysteine + a 4-thiouridine in tRNA + 2 oxidized [2Fe-2S]-[ferredoxin] + AMP + diphosphate. It catalyses the reaction [ThiS sulfur-carrier protein]-C-terminal Gly-Gly-AMP + S-sulfanyl-L-cysteinyl-[cysteine desulfurase] + AH2 = [ThiS sulfur-carrier protein]-C-terminal-Gly-aminoethanethioate + L-cysteinyl-[cysteine desulfurase] + A + AMP + 2 H(+). The protein operates within cofactor biosynthesis; thiamine diphosphate biosynthesis. In terms of biological role, catalyzes the ATP-dependent transfer of a sulfur to tRNA to produce 4-thiouridine in position 8 of tRNAs, which functions as a near-UV photosensor. Also catalyzes the transfer of sulfur to the sulfur carrier protein ThiS, forming ThiS-thiocarboxylate. This is a step in the synthesis of thiazole, in the thiamine biosynthesis pathway. The sulfur is donated as persulfide by IscS. The polypeptide is Probable tRNA sulfurtransferase (Limosilactobacillus fermentum (strain NBRC 3956 / LMG 18251) (Lactobacillus fermentum)).